Here is a 1158-residue protein sequence, read N- to C-terminus: Voltage-gated inwardly rectifying potassium channel KCNH2 (1158 aa).

Over 1 to 402 (MPVRRGHVAP…RIHRWTILHY (402 aa)) the chain is Cytoplasmic. The PAS domain maps to 17 to 88 (TIIRKFEGQS…AAQIAQALLG (72 aa)). The PAC domain maps to 92 to 144 (RKVEIAFYRKDGSCFLCLVDVVPVKNEDGAVIMFILNFEVVMEKDMVGSPTHD). The tract at residues 232 to 314 (RALVGSSSPP…GAMHPLRGGL (83 aa)) is disordered. Phosphoserine is present on serine 239. Positions 258–269 (PDASGSSCSLAR) are enriched in polar residues. Serine 283, serine 284, serine 319, and serine 350 each carry phosphoserine. A helical membrane pass occupies residues 403–423 (SPFKAVWDWLILLLVIYTAVF). Topologically, residues 424 to 449 (TPYSAAFLLKETEEGPPAPDCGYACQ) are extracellular. Residues 450–470 (PLAVVDFIVDIMFIVDILINF) form a helical membrane-spanning segment. The Cytoplasmic portion of the chain corresponds to 471 to 494 (RTTYVNANEEVVSHPGRIAVHYFK). Residues 495–515 (GWFLIDMVAAIPFDLLIFGSG) form a helical membrane-spanning segment. The Extracellular portion of the chain corresponds to 516–519 (SEEL). The chain crosses the membrane as a helical; Voltage-sensor span at residues 520 to 540 (IGLLKTARLLRLVRVARKLDR). Over 541 to 546 (YSEYGA) the chain is Cytoplasmic. A helical transmembrane segment spans residues 547–567 (AVLFLLMCTFALIAHWLACIW). Residues 568 to 610 (YAIGNMEQPHMDSRIGWLHNLGDQIGKPYNSSGLGGPSIKDKY) are Extracellular-facing. N-linked (GlcNAc...) asparagine glycosylation is present at asparagine 597. The pore-forming intramembrane region spans 611–631 (VTALYFTFSSLTSVGFGNVSP). A Selectivity filter motif is present at residues 623-628 (SVGFGN). Residues 632 to 637 (NTNSEK) are Extracellular-facing. The chain crosses the membrane as a helical span at residues 638-658 (IFSICVMLIGSLMYASIFGNV). Residues 659 to 1158 (SAIIQRLYSG…LHRHGSDPGS (500 aa)) are Cytoplasmic-facing. A cNMP-binding domain region spans residues 741-841 (PFRGATKGCL…IHRDDLLEVL (101 aa)). Residues 869 to 987 (GSPGSAELEG…KSSDTCNPLS (119 aa)) are disordered. Phosphoserine is present on residues serine 870 and serine 873. Positions 882–891 (RQRKRKLSFR) are enriched in basic residues. Residues 910-926 (GRAGAGPSGRGRPGGPW) are compositionally biased toward gly residues. Positions 927–938 (GESPSSGPSSPE) are enriched in low complexity. Positions 959–969 (SPRPPGEPPGG) are enriched in pro residues. At arginine 1013 the chain carries Omega-N-methylarginine. Residues 1034–1061 (RGDVEGRLDALQRQLNRLETRLSADMAT) are a coiled coil. Residues 1116 to 1158 (FEELPPGAPELPQDGPPRRLSLPGQLGALTSQPLHRHGSDPGS) are disordered. Residue serine 1136 is modified to Phosphoserine.

The protein belongs to the potassium channel family. H (Eag) (TC 1.A.1.20) subfamily. Kv11.1/KCNH2 sub-subfamily. As to quaternary structure, the potassium channel is probably composed of a homo- or heterotetrameric complex of pore-forming alpha subunits that can associate with modulating beta subunits. Interacts with DNAJB12 and DNAJB14; chaperones DNAJB12 and DNAJB14 promote tetramerization. Heteromultimer with KCNH6/ERG2 and KCNH7/ERG3. Interacts with ALG10B. Forms a stable complex with KCNE1 or KCNE2, and that this heteromultimerization regulates Inward rectifier potassium channel activity. Interacts with CANX. The core-glycosylated, but not the fully glycosylated form interacts with RNF207. Interacts with NDFIP1 and NDFIP2; this interaction decreases the cell membrane expression by targeting KCNH2, through interaction with NEDD4L, for the degradation through the multivesicular bodies (MVBs)-lysosomal pathway. Post-translationally, phosphorylated on serine and threonine residues. Phosphorylation by PKA inhibits ion conduction. As to expression, highly expressed in left and right atria of the heart, in cortex and hippocampus; detected at intermediate levels in left and right ventricle, Purkinje fibers, cerebellum, thalamus and basal ganglia; detected at low levels in liver, spleen and kidney.

It is found in the cell membrane. It carries out the reaction K(+)(in) = K(+)(out). Its function is as follows. Pore-forming (alpha) subunit of voltage-gated inwardly rectifying potassium channel. Characterized by unusual gating kinetics by producing relatively small outward currents during membrane depolarization and large inward currents during subsequent repolarization which reflect a rapid inactivation during depolarization and quick recovery from inactivation but slow deactivation (closing) during repolarization. Channel properties are modulated by cAMP and subunit assembly. Forms a stable complex with KCNE1 or KCNE2, and that this heteromultimerization regulates inward rectifier potassium channel activity. The protein is Voltage-gated inwardly rectifying potassium channel KCNH2 of Canis lupus familiaris (Dog).